The following is a 53-amino-acid chain: Weak toxin NWT (53 aa).

Intrachain disulfides connect cysteine 6-cysteine 11, cysteine 17-cysteine 33, and cysteine 37-cysteine 48.

Belongs to the three-finger toxin family. Ancestral subfamily. Orphan group II sub-subfamily. As to expression, expressed by the venom gland.

Its subcellular location is the secreted. Functionally, binds with low affinity and weakly inhibits muscle nicotinic acetylcholine receptor (nAChR). This Naja kaouthia (Monocled cobra) protein is Weak toxin NWT.